Reading from the N-terminus, the 927-residue chain is MEDPVQLKEEGNKYFQSNDYGNAIECYSKALKLITDKKMKAVLYRNRSACYLKQENYIQAAADASKAIDVDASDIKALFRRCQALEKLGKLDQAYKDVQRCATLEPKNRTFLEMLHRLGSNIQEKLHVQFSTDSRVQKMFEILLDENSDKEKREKAANNLIVLGREDAGAERIFQNNGVNLLMQLIETKDPELILSAVRTLSGMCTGHRARATAIVHLVGINKICSIMAVDHEEIALAACNLLQNIVDSLTGEDKKVHGKEEALVLDTKKDLKVITTHLLDMLVSKKVSGHGRDQALNLLNKNIPRYDLKNKDNSKTLFVVDVGLKKILKVLGQVPELPNCLPLTPNTRLNASVLINKLYDDLRCDPERDDFRKICEEYITGSFDPKDMEKNLHAIQTVSGILQGPFDLGNILLGMQGVMEMMVALTGSEKEVDQLVAVEALIHASTKLSRASFIITNGVSLLKDIYKKTKNEKIKIRALVGLCKLGSAGGTDYALRQFAEGSTDKLAKQCRKWLCNTSLDIQTRKWAVEGLAYLTLDADVKDEFVEDEQSLKAMFELCKTSDKTILYSVATTLVNCTNSYDVKEVIPEMVQLAKFSKQHVPEQHPKDKKDFVLKRVKKLLQADVISALSCMVKADNSILTDQTKEQIARVFLALCDEPKDRGIIVAQGGGKAMIPLALEGTDVGKTKASHGLAKIAAVSNPDIAFPGERVYEVVRPLVSLLNTERDGVQNFEALLALTNLSGKSDKLRQKIVKEKALPEIENYMFENHEQIRQAATECMCNLAVNKEVKERFTAEGNDRLKLIVLLCGEDEEVKLQRAAAGTLAILTAAEKKLCHKMTEVTSQWLEILQRLCLNEDLQVQHRGVVITYNLISAEKELAKKLVESEMLEILTVIGKQADVPNKQHIINVAREALVKCLDYGFIKTVS.

TPR repeat units lie at residues 4–37 (PVQL…ITDK), 41–74 (AVLY…DASD), and 76–108 (KALF…EPKN). ARM repeat units follow at residues 167 to 206 (DAGA…GMCT), 209 to 248 (RARA…NIVD), and 746 to 785 (DKLR…NLAV).

The protein resides in the cytoplasm. The protein localises to the myofibril. It localises to the sarcomere. Its subcellular location is the z line. It is found in the a band. The protein resides in the perinuclear region. The protein localises to the cytosol. Functionally, acts as a co-chaperone for HSP90 and is required for proper folding of the myosin motor domain. Plays a role in sarcomere formation during muscle cell assembly. Is necessary for normal early lens development. The chain is Protein unc-45 homolog B from Xenopus laevis (African clawed frog).